The chain runs to 293 residues: 4-diphosphocytidyl-2-C-methyl-D-erythritol kinase (293 aa).

Lys-16 is a catalytic residue. An ATP-binding site is contributed by 99–109 (PMGAGLGGGSS). Residue Asp-141 is part of the active site.

Belongs to the GHMP kinase family. IspE subfamily.

The catalysed reaction is 4-CDP-2-C-methyl-D-erythritol + ATP = 4-CDP-2-C-methyl-D-erythritol 2-phosphate + ADP + H(+). Its pathway is isoprenoid biosynthesis; isopentenyl diphosphate biosynthesis via DXP pathway; isopentenyl diphosphate from 1-deoxy-D-xylulose 5-phosphate: step 3/6. Functionally, catalyzes the phosphorylation of the position 2 hydroxy group of 4-diphosphocytidyl-2C-methyl-D-erythritol. The protein is 4-diphosphocytidyl-2-C-methyl-D-erythritol kinase of Paraburkholderia xenovorans (strain LB400).